Consider the following 538-residue polypeptide: Putative cysteine ligase BshC (538 aa).

Residues 421 to 485 adopt a coiled-coil conformation; sequence VEEKFQEAKK…LERRHEVELN (65 aa).

The protein belongs to the BshC family.

Its function is as follows. Involved in bacillithiol (BSH) biosynthesis. May catalyze the last step of the pathway, the addition of cysteine to glucosamine malate (GlcN-Mal) to generate BSH. This Bacillus cytotoxicus (strain DSM 22905 / CIP 110041 / 391-98 / NVH 391-98) protein is Putative cysteine ligase BshC.